Reading from the N-terminus, the 304-residue chain is Polyisoprenyl-teichoic acid--peptidoglycan teichoic acid transferase TagU (304 aa).

At Met-1–Lys-4 the chain is on the cytoplasmic side. The helical; Signal-anchor for type II membrane protein transmembrane segment at Ile-5 to Tyr-25 threads the bilayer. Over Ser-26–Lys-304 the chain is Extracellular.

This sequence belongs to the LytR/CpsA/Psr (LCP) family.

It is found in the cell membrane. Its pathway is cell wall biogenesis. Functionally, may catalyze the final step in cell wall teichoic acid biosynthesis, the transfer of the anionic cell wall polymers (APs) from their lipid-linked precursor to the cell wall peptidoglycan (PG). The protein is Polyisoprenyl-teichoic acid--peptidoglycan teichoic acid transferase TagU of Bacillus cereus (strain ATCC 14579 / DSM 31 / CCUG 7414 / JCM 2152 / NBRC 15305 / NCIMB 9373 / NCTC 2599 / NRRL B-3711).